Consider the following 1165-residue polypeptide: ATP-dependent helicase/deoxyribonuclease subunit B (1165 aa).

The region spanning Met-1–Glu-324 is the UvrD-like helicase ATP-binding domain. An ATP-binding site is contributed by Gly-6–Ser-13. Residues Pro-282–His-597 enclose the UvrD-like helicase C-terminal domain. Cys-803, Cys-1121, Cys-1124, and Cys-1130 together coordinate [4Fe-4S] cluster.

This sequence belongs to the helicase family. AddB/RexB type 1 subfamily. As to quaternary structure, heterodimer of AddA and AddB. Mg(2+) is required as a cofactor. [4Fe-4S] cluster serves as cofactor.

Its function is as follows. The heterodimer acts as both an ATP-dependent DNA helicase and an ATP-dependent, dual-direction single-stranded exonuclease. Recognizes the chi site generating a DNA molecule suitable for the initiation of homologous recombination. The AddB subunit has 5' -&gt; 3' nuclease activity but not helicase activity. In Symbiobacterium thermophilum (strain DSM 24528 / JCM 14929 / IAM 14863 / T), this protein is ATP-dependent helicase/deoxyribonuclease subunit B.